The sequence spans 194 residues: FMN-dependent NADH:quinone oxidoreductase (194 aa).

FMN is bound by residues Ser-10 and Met-90–Leu-93.

This sequence belongs to the azoreductase type 1 family. Homodimer. It depends on FMN as a cofactor.

The enzyme catalyses 2 a quinone + NADH + H(+) = 2 a 1,4-benzosemiquinone + NAD(+). It catalyses the reaction N,N-dimethyl-1,4-phenylenediamine + anthranilate + 2 NAD(+) = 2-(4-dimethylaminophenyl)diazenylbenzoate + 2 NADH + 2 H(+). Quinone reductase that provides resistance to thiol-specific stress caused by electrophilic quinones. Functionally, also exhibits azoreductase activity. Catalyzes the reductive cleavage of the azo bond in aromatic azo compounds to the corresponding amines. The protein is FMN-dependent NADH:quinone oxidoreductase of Haemophilus influenzae (strain 86-028NP).